Here is a 130-residue protein sequence, read N- to C-terminus: UPF0225 protein DR_0483 (130 aa).

The protein belongs to the UPF0225 family.

In Deinococcus radiodurans (strain ATCC 13939 / DSM 20539 / JCM 16871 / CCUG 27074 / LMG 4051 / NBRC 15346 / NCIMB 9279 / VKM B-1422 / R1), this protein is UPF0225 protein DR_0483.